A 292-amino-acid polypeptide reads, in one-letter code: Putative FNIP repeat-containing protein L281 (292 aa).

One copy of the FNIP repeat lies at Phe95–Ser134.

The chain is Putative FNIP repeat-containing protein L281 from Acanthamoeba polyphaga mimivirus (APMV).